Here is a 553-residue protein sequence, read N- to C-terminus: Flagellar hook-associated protein 1 (553 aa).

The protein belongs to the flagella basal body rod proteins family.

It localises to the secreted. The protein resides in the bacterial flagellum. The protein is Flagellar hook-associated protein 1 (flgK) of Salmonella typhi.